Here is a 295-residue protein sequence, read N- to C-terminus: Acetyl-coenzyme A carboxylase carboxyl transferase subunit beta (295 aa).

The segment at 1–20 (MSWLSKLMPSGIRTENTPAK) is disordered. In terms of domain architecture, CoA carboxyltransferase N-terminal spans 28 to 295 (LWEKCSNCGS…QPHPQDADAA (268 aa)). Residues Cys-32, Cys-35, Cys-51, and Cys-54 each contribute to the Zn(2+) site. Residues 32-54 (CSNCGSALYGPELEENLEVCPKC) form a C4-type zinc finger.

Belongs to the AccD/PCCB family. As to quaternary structure, acetyl-CoA carboxylase is a heterohexamer composed of biotin carboxyl carrier protein (AccB), biotin carboxylase (AccC) and two subunits each of ACCase subunit alpha (AccA) and ACCase subunit beta (AccD). The cofactor is Zn(2+).

Its subcellular location is the cytoplasm. It carries out the reaction N(6)-carboxybiotinyl-L-lysyl-[protein] + acetyl-CoA = N(6)-biotinyl-L-lysyl-[protein] + malonyl-CoA. It functions in the pathway lipid metabolism; malonyl-CoA biosynthesis; malonyl-CoA from acetyl-CoA: step 1/1. Its function is as follows. Component of the acetyl coenzyme A carboxylase (ACC) complex. Biotin carboxylase (BC) catalyzes the carboxylation of biotin on its carrier protein (BCCP) and then the CO(2) group is transferred by the transcarboxylase to acetyl-CoA to form malonyl-CoA. This is Acetyl-coenzyme A carboxylase carboxyl transferase subunit beta from Xanthomonas euvesicatoria pv. vesicatoria (strain 85-10) (Xanthomonas campestris pv. vesicatoria).